The primary structure comprises 345 residues: MPRIDADLKLDFKDVLLRPKRSSLKSRSEVDLERTFTFRNSKQTYSGIPVIVANMDTVGTFEMAVVMSQHAMFTAIHKHYSLDDWKHFAENHPECLQHVAVSSGSGQNDLEKMSLILEAVPQVKFICLDVANGYSEHFVEFVKLVRSKFPEHTIMAGNVVTGEMVEELILSGADIIKVGVGPGSVCTTRTKTGVGYPQLSAVIECADSAHGLKGHIISDGSCTCPGDVAKAFGAGADFVMLGGMFSGHTECAGEVIERNGQKLKLFYGMSSDTAMKKHAGGVAEYRASEGKTVEVPYKGDVENTILDILGGLRSTCTYVGAAKLKELSRRATFIRVTQQHNTVFG.

26-27 (SR) contributes to the NADP(+) binding site. Serine 28 is modified (phosphoserine). NADP(+)-binding positions include lysine 78, 129–131 (DVA), and 180–181 (VG). K(+)-binding residues include glycine 181, glycine 183, and cysteine 186. The Thioimidate intermediate role is filled by cysteine 186. Threonine 188 (proton donor/acceptor) is an active-site residue. Arginine 189 lines the K(+) pocket. GMP-binding positions include 242 to 243 (GG), 268 to 270 (GMS), and 286 to 290 (RASEG). Residues methionine 269, 285-286 (YR), and 314-317 (STCT) each bind NADP(+).

Belongs to the IMPDH/GMPR family. GuaC type 1 subfamily. In terms of assembly, homotetramer.

It carries out the reaction IMP + NH4(+) + NADP(+) = GMP + NADPH + 2 H(+). Its function is as follows. Catalyzes the irreversible NADPH-dependent deamination of GMP to IMP. It functions in the conversion of nucleobase, nucleoside and nucleotide derivatives of G to A nucleotides, and in maintaining the intracellular balance of A and G nucleotides. This Rattus norvegicus (Rat) protein is GMP reductase 1 (Gmpr).